Consider the following 146-residue polypeptide: Oleosin (146 aa).

Ala2 bears the N-acetylalanine mark. 3 consecutive transmembrane segments (helical) span residues 22 to 42 (ILGFITLFVSGAILLLLTGLT), 56 to 76 (VLIFFSPILIPVATVLFVAVA), and 77 to 97 (GFLSAGGFGLAALSAISWLYN). The short motif at 55–66 (PVLIFFSPILIP) is the Proline-knot element.

It belongs to the oleosin family. As to expression, expressed in pollen (at protein level).

The protein resides in the lipid droplet. It localises to the membrane. The polypeptide is Oleosin (Pinus elliottii (Slash pine)).